The sequence spans 276 residues: Large ribosomal subunit protein uL2 (276 aa).

Residues 219-268 form a disordered region; sequence TVRGSVMNPNDHPHGGGEGRQPVGRKSPMTPWGKPALGLKTRNKKAKSSK.

The protein belongs to the universal ribosomal protein uL2 family. In terms of assembly, part of the 50S ribosomal subunit. Forms a bridge to the 30S subunit in the 70S ribosome.

Functionally, one of the primary rRNA binding proteins. Required for association of the 30S and 50S subunits to form the 70S ribosome, for tRNA binding and peptide bond formation. It has been suggested to have peptidyltransferase activity; this is somewhat controversial. Makes several contacts with the 16S rRNA in the 70S ribosome. This chain is Large ribosomal subunit protein uL2, found in Lactococcus lactis subsp. cremoris (strain MG1363).